The chain runs to 261 residues: Putative [LysW]-aminoadipate/[LysW]-glutamate kinase (261 aa).

Residues 35 to 36 (GG), Arg-62, and Asn-162 contribute to the substrate site.

It belongs to the acetylglutamate kinase family. LysZ subfamily.

It is found in the cytoplasm. The enzyme catalyses [amino-group carrier protein]-C-terminal-N-(1,4-dicarboxybutan-1-yl)-L-glutamine + ATP = [amino-group carrier protein]-C-terminal-N-(1-carboxy-5-phosphooxy-5-oxopentan-1-yl)-L-glutamine + ADP. It catalyses the reaction [amino-group carrier protein]-C-terminal-gamma-(L-glutamyl)-L-glutamate + ATP = [amino-group carrier protein]-C-terminal-gamma-(5-phospho-L-glutamyl)-L-glutamate + ADP. Its pathway is amino-acid biosynthesis; L-lysine biosynthesis via AAA pathway; L-lysine from L-alpha-aminoadipate (Thermus route): step 2/5. The protein operates within amino-acid biosynthesis; L-arginine biosynthesis. Functionally, involved in both the arginine and lysine biosynthetic pathways. Phosphorylates the LysW-bound precursors glutamate (for arginine biosynthesis), respectively alpha-aminoadipate (for lysine biosynthesis). This Pyrobaculum calidifontis (strain DSM 21063 / JCM 11548 / VA1) protein is Putative [LysW]-aminoadipate/[LysW]-glutamate kinase.